The sequence spans 190 residues: Elongation factor P 1 (190 aa).

This sequence belongs to the elongation factor P family.

It is found in the cytoplasm. The protein operates within protein biosynthesis; polypeptide chain elongation. Functionally, involved in peptide bond synthesis. Stimulates efficient translation and peptide-bond synthesis on native or reconstituted 70S ribosomes in vitro. Probably functions indirectly by altering the affinity of the ribosome for aminoacyl-tRNA, thus increasing their reactivity as acceptors for peptidyl transferase. This Lactobacillus johnsonii (strain CNCM I-12250 / La1 / NCC 533) protein is Elongation factor P 1 (efp1).